We begin with the raw amino-acid sequence, 429 residues long: Adenylosuccinate synthetase (429 aa).

GTP contacts are provided by residues 12–18 and 40–42; these read GDEGKGK and GHT. Aspartate 13 serves as the catalytic Proton acceptor. 2 residues coordinate Mg(2+): aspartate 13 and glycine 40. IMP-binding positions include 13–16, 38–41, threonine 129, arginine 143, glutamine 224, threonine 239, and arginine 303; these read DEGK and NAGH. The active-site Proton donor is histidine 41. 299–305 is a substrate binding site; that stretch reads ATTGRKR. Residues arginine 305, 331 to 333, and 413 to 415 each bind GTP; these read KLD and SVG.

This sequence belongs to the adenylosuccinate synthetase family. Homodimer. The cofactor is Mg(2+).

The protein resides in the cytoplasm. The catalysed reaction is IMP + L-aspartate + GTP = N(6)-(1,2-dicarboxyethyl)-AMP + GDP + phosphate + 2 H(+). Its pathway is purine metabolism; AMP biosynthesis via de novo pathway; AMP from IMP: step 1/2. In terms of biological role, plays an important role in the de novo pathway of purine nucleotide biosynthesis. Catalyzes the first committed step in the biosynthesis of AMP from IMP. The polypeptide is Adenylosuccinate synthetase (Desulfosudis oleivorans (strain DSM 6200 / JCM 39069 / Hxd3) (Desulfococcus oleovorans)).